The primary structure comprises 307 residues: MPSEHPFSDGISTLNPKETMNDTAQITASYGRRYIVRTPDGTTYEASTRKKRVDFACGDRVRISPVNAEQVVIEDFLPRQSLLYRQDAWKTKLIAANVTQLLIVTAAVPSPSVRLLQRALLAAEAAGIRAVIVLNKADLPETALWREKLKFYETLGYPVIETRALENAGSLRPALQGHSNILLGQSGMGKSTLTNALLGSQTARTGDISAALDSGKHTTTHARLYDLNGETQLIDSPGLQEFGLHHLQAADLPRYFPDFRHLVGQCRFHNCTHRAEPGCAFKAAAETRAASPERLAFLQGITDELPG.

The 158-residue stretch at 85–242 folds into the CP-type G domain; that stretch reads RQDAWKTKLI…LIDSPGLQEF (158 aa). GTP is bound by residues 135–138 and 184–192; these read NKAD and GQSGMGKST. Positions 266, 271, 273, and 279 each coordinate Zn(2+).

Belongs to the TRAFAC class YlqF/YawG GTPase family. RsgA subfamily. In terms of assembly, monomer. Associates with 30S ribosomal subunit, binds 16S rRNA. The cofactor is Zn(2+).

It localises to the cytoplasm. One of several proteins that assist in the late maturation steps of the functional core of the 30S ribosomal subunit. Helps release RbfA from mature subunits. May play a role in the assembly of ribosomal proteins into the subunit. Circularly permuted GTPase that catalyzes slow GTP hydrolysis, GTPase activity is stimulated by the 30S ribosomal subunit. This Neisseria meningitidis serogroup C (strain 053442) protein is Small ribosomal subunit biogenesis GTPase RsgA.